The chain runs to 28 residues: Chassatide C12 (28 aa).

Residues 1–28 (EYCGESCYLIPCFTPGCYCVSRQCVNKN) constitute a cross-link (cyclopeptide (Glu-Asn)). 3 disulfide bridges follow: Cys-3–Cys-17, Cys-7–Cys-19, and Cys-12–Cys-24.

Post-translationally, this is a cyclic peptide. As to expression, expressed in fruit, pedicel, leaf and stem but not in root (at protein level).

Functionally, probably participates in a plant defense mechanism. This chain is Chassatide C12, found in Chassalia chartacea (Chassalia curviflora).